The following is a 224-amino-acid chain: MSIRDWPAAERPREKLLAQGAAALTDAELLAIFLRTGVAGCSAVDLARRLLAEFGSLRALLEAELPDFSQHLGLGPAKYAQLQAVLEMARRHLAERLRRDSALESPQAVRDYLKAQLRHEPHEVFGCLFLDAKHRVLAFEVLFRGSIDSASVYPRQVVKRALANNAAAVILTHNHPSGVCEPSQADRVLTQRLKDALALVEVRVLDHFIVGDGEPLSMAELGWM.

The 123-residue stretch at 102–224 (ALESPQAVRD…PLSMAELGWM (123 aa)) folds into the MPN domain. Residues His173, His175, and Asp186 each coordinate Zn(2+). A JAMM motif motif is present at residues 173-186 (HNHPSGVCEPSQAD).

It belongs to the UPF0758 family.

In Ectopseudomonas mendocina (strain ymp) (Pseudomonas mendocina), this protein is UPF0758 protein Pmen_4376.